Reading from the N-terminus, the 204-residue chain is FMN-dependent NADH:quinone oxidoreductase (204 aa).

FMN is bound by residues Ser-9 and 15–17 (SAS).

The protein belongs to the azoreductase type 1 family. In terms of assembly, homodimer. FMN serves as cofactor.

The catalysed reaction is 2 a quinone + NADH + H(+) = 2 a 1,4-benzosemiquinone + NAD(+). The enzyme catalyses N,N-dimethyl-1,4-phenylenediamine + anthranilate + 2 NAD(+) = 2-(4-dimethylaminophenyl)diazenylbenzoate + 2 NADH + 2 H(+). In terms of biological role, quinone reductase that provides resistance to thiol-specific stress caused by electrophilic quinones. Also exhibits azoreductase activity. Catalyzes the reductive cleavage of the azo bond in aromatic azo compounds to the corresponding amines. The protein is FMN-dependent NADH:quinone oxidoreductase of Xanthomonas campestris pv. campestris (strain ATCC 33913 / DSM 3586 / NCPPB 528 / LMG 568 / P 25).